Here is a 323-residue protein sequence, read N- to C-terminus: tRNA dimethylallyltransferase (323 aa).

32–39 (GPTASGKS) is a binding site for ATP. Substrate is bound at residue 34–39 (TASGKS). Residues 57–60 (DSMQ) form an interaction with substrate tRNA region.

It belongs to the IPP transferase family. As to quaternary structure, monomer. Mg(2+) serves as cofactor.

The enzyme catalyses adenosine(37) in tRNA + dimethylallyl diphosphate = N(6)-dimethylallyladenosine(37) in tRNA + diphosphate. Functionally, catalyzes the transfer of a dimethylallyl group onto the adenine at position 37 in tRNAs that read codons beginning with uridine, leading to the formation of N6-(dimethylallyl)adenosine (i(6)A). This is tRNA dimethylallyltransferase from Rhodopseudomonas palustris (strain BisB5).